A 735-amino-acid polypeptide reads, in one-letter code: uncharacterized protein (735 aa).

Positions 25 to 175 (DLSCLSPDLL…CIAAVLAGLL (151 aa)) constitute a GAF domain. The PAS domain maps to 185–255 (SEAARRAMLD…RQGFMRHLAT (71 aa)). The PAC domain maps to 263–313 (RLVEVEALRADGSVFPAELTVNEHRAGGRRLFSAFVRDISDRITSRRALER). The GGDEF domain occupies 342–464 (GAVVLMLRDL…DGHLLHFAEH (123 aa)). The EAL domain occupies 472–732 (RLELEMALRD…VAGTLPETLA (261 aa)).

This is an uncharacterized protein from Azorhizobium caulinodans (strain ATCC 43989 / DSM 5975 / JCM 20966 / LMG 6465 / NBRC 14845 / NCIMB 13405 / ORS 571).